The following is a 44-amino-acid chain: MRNLKTYLSVAPVLSTLWFGSLAGLLIEINRFFPDALTFPFFSF.

A helical membrane pass occupies residues 7–27 (YLSVAPVLSTLWFGSLAGLLI).

Belongs to the PsaJ family.

Its subcellular location is the plastid. The protein localises to the chloroplast thylakoid membrane. In terms of biological role, may help in the organization of the PsaE and PsaF subunits. This chain is Photosystem I reaction center subunit IX, found in Fagopyrum esculentum subsp. ancestrale (Wild buckwheat).